The primary structure comprises 355 residues: 3,4-dihydroxy-2-butanone 4-phosphate synthase (355 aa).

The tract at residues 1–202 (MYHKRIKEAI…VSDIIQYRLN (202 aa)) is DHBP synthase. D-ribulose 5-phosphate contacts are provided by residues 27 to 28 (RE), D32, 139 to 143 (RTGHT), and E163. E28 contributes to the Mg(2+) binding site. Residue H142 coordinates Mg(2+). Positions 203 to 355 (FENLLREITR…NLHLVEKIEV (153 aa)) are GTP cyclohydrolase II-like.

This sequence in the N-terminal section; belongs to the DHBP synthase family. The protein in the C-terminal section; belongs to the GTP cyclohydrolase II family. Mg(2+) is required as a cofactor. Mn(2+) serves as cofactor.

The catalysed reaction is D-ribulose 5-phosphate = (2S)-2-hydroxy-3-oxobutyl phosphate + formate + H(+). Its pathway is cofactor biosynthesis; riboflavin biosynthesis; 2-hydroxy-3-oxobutyl phosphate from D-ribulose 5-phosphate: step 1/1. Catalyzes the conversion of D-ribulose 5-phosphate to formate and 3,4-dihydroxy-2-butanone 4-phosphate. In Helicobacter hepaticus (strain ATCC 51449 / 3B1), this protein is 3,4-dihydroxy-2-butanone 4-phosphate synthase (ribB).